Here is a 319-residue protein sequence, read N- to C-terminus: Annexin A4 (319 aa).

N-acetylalanine is present on A2. A Phosphothreonine modification is found at T7. Phosphoserine is present on S12. Annexin repeat units lie at residues 14-85, 86-157, 169-241, and 245-316; these read FNAA…GMMT, PTVL…SLSA, ALMR…AIVK, and NKSA…ILCG. K213, K293, and K300 each carry N6-acetyllysine.

The protein belongs to the annexin family. As to quaternary structure, monomer. Binds to SFTPA1 in a Ca(2+)-dependent manner.

Its subcellular location is the zymogen granule membrane. Functionally, may play a role in alveolar type II cells through interaction with the surfactant protein SFTPA1 (SP-A). In Bos taurus (Bovine), this protein is Annexin A4 (ANXA4).